We begin with the raw amino-acid sequence, 385 residues long: Dual-specificity RNA methyltransferase RlmN (385 aa).

Catalysis depends on Glu113, which acts as the Proton acceptor. Residues 120–352 (VGRAGALCVS…NRAGYASPIR (233 aa)) enclose the Radical SAM core domain. A disulfide bridge links Cys127 with Cys363. Cys134, Cys138, and Cys141 together coordinate [4Fe-4S] cluster. S-adenosyl-L-methionine contacts are provided by residues 189–190 (GE), Ser221, 243–245 (SLH), and Asn320. The S-methylcysteine intermediate role is filled by Cys363.

This sequence belongs to the radical SAM superfamily. RlmN family. [4Fe-4S] cluster is required as a cofactor.

The protein resides in the cytoplasm. The catalysed reaction is adenosine(2503) in 23S rRNA + 2 reduced [2Fe-2S]-[ferredoxin] + 2 S-adenosyl-L-methionine = 2-methyladenosine(2503) in 23S rRNA + 5'-deoxyadenosine + L-methionine + 2 oxidized [2Fe-2S]-[ferredoxin] + S-adenosyl-L-homocysteine. It carries out the reaction adenosine(37) in tRNA + 2 reduced [2Fe-2S]-[ferredoxin] + 2 S-adenosyl-L-methionine = 2-methyladenosine(37) in tRNA + 5'-deoxyadenosine + L-methionine + 2 oxidized [2Fe-2S]-[ferredoxin] + S-adenosyl-L-homocysteine. Specifically methylates position 2 of adenine 2503 in 23S rRNA and position 2 of adenine 37 in tRNAs. m2A2503 modification seems to play a crucial role in the proofreading step occurring at the peptidyl transferase center and thus would serve to optimize ribosomal fidelity. In Phenylobacterium zucineum (strain HLK1), this protein is Dual-specificity RNA methyltransferase RlmN.